A 291-amino-acid polypeptide reads, in one-letter code: MSAIDDLPPLREVIRAHGLSAQKSLGQNFLLDLNLTARIARGSGPLEGATVVEVGPGPGGLTRALLALGARKVIAIERDHRCIAALNEIAAAYPGRLEIIEGDALKVDVRPHLDGAEARVVANLPYNVGTQLLVGWLSTDPWPPWFSSLTLMFQREVAERIVAGPDSKAYGRLAVLTGWRAQARILFDVAPSAFVPPPKVTSSVIHVVPRAEPVPCALRDLERVTEAAFGQRRKMLRQSLKSLGVDPLALLSETGIDETARAEEIDVAGFLALANAFGRARGGGTGDAAGA.

The S-adenosyl-L-methionine site is built by Asn-28, Leu-30, Gly-55, Glu-77, Asp-103, and Asn-123.

This sequence belongs to the class I-like SAM-binding methyltransferase superfamily. rRNA adenine N(6)-methyltransferase family. RsmA subfamily.

The protein localises to the cytoplasm. The catalysed reaction is adenosine(1518)/adenosine(1519) in 16S rRNA + 4 S-adenosyl-L-methionine = N(6)-dimethyladenosine(1518)/N(6)-dimethyladenosine(1519) in 16S rRNA + 4 S-adenosyl-L-homocysteine + 4 H(+). Its function is as follows. Specifically dimethylates two adjacent adenosines (A1518 and A1519) in the loop of a conserved hairpin near the 3'-end of 16S rRNA in the 30S particle. May play a critical role in biogenesis of 30S subunits. This chain is Ribosomal RNA small subunit methyltransferase A, found in Azorhizobium caulinodans (strain ATCC 43989 / DSM 5975 / JCM 20966 / LMG 6465 / NBRC 14845 / NCIMB 13405 / ORS 571).